We begin with the raw amino-acid sequence, 281 residues long: N-acetylmuramic acid 6-phosphate etherase (281 aa).

The region spanning Ile63–Arg226 is the SIS domain. Glu91 serves as the catalytic Proton donor. Glu122 is a catalytic residue.

The protein belongs to the GCKR-like family. MurNAc-6-P etherase subfamily. In terms of assembly, homodimer.

The enzyme catalyses N-acetyl-D-muramate 6-phosphate + H2O = N-acetyl-D-glucosamine 6-phosphate + (R)-lactate. It functions in the pathway amino-sugar metabolism; N-acetylmuramate degradation. In terms of biological role, specifically catalyzes the cleavage of the D-lactyl ether substituent of MurNAc 6-phosphate, producing GlcNAc 6-phosphate and D-lactate. The chain is N-acetylmuramic acid 6-phosphate etherase from Bacteroides fragilis (strain ATCC 25285 / DSM 2151 / CCUG 4856 / JCM 11019 / LMG 10263 / NCTC 9343 / Onslow / VPI 2553 / EN-2).